A 308-amino-acid polypeptide reads, in one-letter code: Olfactory receptor 4N5 (308 aa).

The Extracellular segment spans residues 1–25 (METQNLTVVTEFILLGLTQSQDAQL). A glycan (N-linked (GlcNAc...) asparagine) is linked at Asn-5. The chain crosses the membrane as a helical span at residues 26–49 (LVFVLVLIFYLIILPGNFLIIFTI). Topologically, residues 50-57 (KSDPGLTA) are cytoplasmic. The chain crosses the membrane as a helical span at residues 58–79 (PLYFFLGNLALLDASYSFIVVP). Topologically, residues 80 to 100 (RMLVDFLSEKKVISYRSCITQ) are extracellular. Cys-97 and Cys-189 are joined by a disulfide. Residues 101–120 (LFFLHFLGAGEMFLLVVMAF) traverse the membrane as a helical segment. The Cytoplasmic portion of the chain corresponds to 121–139 (DRYIAICRPLHYSTIMNPR). Residues 140 to 158 (ACYALSLVLWLGGFIHSIV) form a helical membrane-spanning segment. At 159 to 195 (QVALILHLPFCGPNQLDNFFCDVPQVIKLACTNTFVV) the chain is on the extracellular side. The chain crosses the membrane as a helical span at residues 196-219 (ELLMVSNSGLLSLLCFLGLLASYA). The Cytoplasmic segment spans residues 220 to 235 (VILCRIREHSSEGKSK). The chain crosses the membrane as a helical span at residues 236-258 (AISTCTTHIIIIFLMFGPAIFIY). At 259–269 (TCPFQAFPADK) the chain is on the extracellular side. The chain crosses the membrane as a helical span at residues 270–289 (VVSLFHTVIFPLMNPVIYTL). Topologically, residues 290–308 (RNQEVKASMRKLLSQHMFC) are cytoplasmic.

This sequence belongs to the G-protein coupled receptor 1 family.

It is found in the cell membrane. Odorant receptor. The chain is Olfactory receptor 4N5 (OR4N5) from Homo sapiens (Human).